The chain runs to 395 residues: Elongation factor Tu (395 aa).

The tr-type G domain maps to 10–205 (KPHCNIGTIG…AVDSYIPQPE (196 aa)). A G1 region spans residues 19-26 (GHVDHGKT). 19 to 26 (GHVDHGKT) is a binding site for GTP. A Mg(2+)-binding site is contributed by Thr-26. Residues 60 to 64 (GITIA) form a G2 region. Residues 81-84 (DCPG) are G3. GTP contacts are provided by residues 81–85 (DCPGH) and 136–139 (NKMD). The tract at residues 136 to 139 (NKMD) is G4. The tract at residues 173-175 (SAL) is G5.

Belongs to the TRAFAC class translation factor GTPase superfamily. Classic translation factor GTPase family. EF-Tu/EF-1A subfamily. In terms of assembly, monomer.

The protein localises to the cytoplasm. The catalysed reaction is GTP + H2O = GDP + phosphate + H(+). Functionally, GTP hydrolase that promotes the GTP-dependent binding of aminoacyl-tRNA to the A-site of ribosomes during protein biosynthesis. The polypeptide is Elongation factor Tu (Acidiphilium cryptum (strain JF-5)).